Consider the following 48-residue polypeptide: M-oxotoxin-Ot1b (48 aa).

The protein localises to the secreted. It localises to the target cell membrane. In terms of biological role, disrupts cell membranes, particularly those rich in phosphocholine, through formation of pores. Has antimicrobial activity, hemolytic activity and insecticidal activity. In Oxyopes takobius (Lynx spider), this protein is M-oxotoxin-Ot1b.